The following is a 372-amino-acid chain: Ribosomal RNA small subunit methyltransferase H (372 aa).

S-adenosyl-L-methionine-binding positions include 44-46, Asp-63, Leu-97, Asp-111, and Gln-118; that span reads GGH. Residues 315–334 show a composition bias toward basic and acidic residues; sequence RAAERLDPTAEQRRRTDRER. Residues 315–372 are disordered; sequence RAAERLDPTAEQRRRTDRERYRRRVRAMHQPGTGSAVRRPTPGDDGTGTDEEGEGHDS. Residues 361–372 show a composition bias toward acidic residues; that stretch reads TGTDEEGEGHDS.

The protein belongs to the methyltransferase superfamily. RsmH family.

Its subcellular location is the cytoplasm. The enzyme catalyses cytidine(1402) in 16S rRNA + S-adenosyl-L-methionine = N(4)-methylcytidine(1402) in 16S rRNA + S-adenosyl-L-homocysteine + H(+). In terms of biological role, specifically methylates the N4 position of cytidine in position 1402 (C1402) of 16S rRNA. The protein is Ribosomal RNA small subunit methyltransferase H of Salinispora arenicola (strain CNS-205).